Here is a 45-residue protein sequence, read N- to C-terminus: Large ribosomal subunit protein bL34 (45 aa).

The segment at 26-45 (RAGRSILSARRSKGRSQLSA) is disordered.

It belongs to the bacterial ribosomal protein bL34 family.

The chain is Large ribosomal subunit protein bL34 from Parafrankia sp. (strain EAN1pec).